The following is a 617-amino-acid chain: 1-deoxy-D-xylulose-5-phosphate synthase (617 aa).

Residues His77 and 118–120 (GHS) each bind thiamine diphosphate. Asp149 contacts Mg(2+). Residues 150 to 151 (GA), Asn178, Tyr287, and Glu368 contribute to the thiamine diphosphate site. Residue Asn178 coordinates Mg(2+).

It belongs to the transketolase family. DXPS subfamily. In terms of assembly, homodimer. Mg(2+) serves as cofactor. It depends on thiamine diphosphate as a cofactor.

It carries out the reaction D-glyceraldehyde 3-phosphate + pyruvate + H(+) = 1-deoxy-D-xylulose 5-phosphate + CO2. It functions in the pathway metabolic intermediate biosynthesis; 1-deoxy-D-xylulose 5-phosphate biosynthesis; 1-deoxy-D-xylulose 5-phosphate from D-glyceraldehyde 3-phosphate and pyruvate: step 1/1. In terms of biological role, catalyzes the acyloin condensation reaction between C atoms 2 and 3 of pyruvate and glyceraldehyde 3-phosphate to yield 1-deoxy-D-xylulose-5-phosphate (DXP). This is 1-deoxy-D-xylulose-5-phosphate synthase from Haemophilus ducreyi (strain 35000HP / ATCC 700724).